The primary structure comprises 466 residues: 3-isopropylmalate dehydratase large subunit (466 aa).

[4Fe-4S] cluster-binding residues include Cys-347, Cys-407, and Cys-410.

The protein belongs to the aconitase/IPM isomerase family. LeuC type 1 subfamily. In terms of assembly, heterodimer of LeuC and LeuD. [4Fe-4S] cluster serves as cofactor.

The catalysed reaction is (2R,3S)-3-isopropylmalate = (2S)-2-isopropylmalate. The protein operates within amino-acid biosynthesis; L-leucine biosynthesis; L-leucine from 3-methyl-2-oxobutanoate: step 2/4. In terms of biological role, catalyzes the isomerization between 2-isopropylmalate and 3-isopropylmalate, via the formation of 2-isopropylmaleate. In Cronobacter sakazakii (strain ATCC BAA-894) (Enterobacter sakazakii), this protein is 3-isopropylmalate dehydratase large subunit.